The primary structure comprises 294 residues: Shikimate dehydrogenase (NADP(+)) (294 aa).

Shikimate contacts are provided by residues 22–24 and serine 69; that span reads SLS. Lysine 73 (proton acceptor) is an active-site residue. Shikimate is bound by residues asparagine 94 and aspartate 111. Residues 135-139 and leucine 236 each bind NADP(+); that span reads GAGGA. Tyrosine 238 contacts shikimate. Glycine 260 serves as a coordination point for NADP(+).

It belongs to the shikimate dehydrogenase family. Homodimer.

It catalyses the reaction shikimate + NADP(+) = 3-dehydroshikimate + NADPH + H(+). The protein operates within metabolic intermediate biosynthesis; chorismate biosynthesis; chorismate from D-erythrose 4-phosphate and phosphoenolpyruvate: step 4/7. Its function is as follows. Involved in the biosynthesis of the chorismate, which leads to the biosynthesis of aromatic amino acids. Catalyzes the reversible NADPH linked reduction of 3-dehydroshikimate (DHSA) to yield shikimate (SA). The polypeptide is Shikimate dehydrogenase (NADP(+)) (Streptococcus equi subsp. zooepidemicus (strain H70)).